A 389-amino-acid chain; its full sequence is Chalcone synthase 3 (389 aa).

The active site involves Cys-164.

The protein belongs to the thiolase-like superfamily. Chalcone/stilbene synthases family.

The catalysed reaction is (E)-4-coumaroyl-CoA + 3 malonyl-CoA + 3 H(+) = 2',4,4',6'-tetrahydroxychalcone + 3 CO2 + 4 CoA. It functions in the pathway secondary metabolite biosynthesis; flavonoid biosynthesis. Functionally, the primary product of this enzyme is 4,2',4',6'-tetrahydroxychalcone (also termed naringenin-chalcone or chalcone) which can under specific conditions spontaneously isomerize into naringenin. The protein is Chalcone synthase 3 (CHS3) of Pisum sativum (Garden pea).